Here is a 449-residue protein sequence, read N- to C-terminus: Glutamyl-tRNA(Gln) amidotransferase subunit A (449 aa).

Catalysis depends on charge relay system residues Lys51 and Ser126. The interval 103-128 (STTESSAHGKTLNPVDSSRVPGGSSG) is disordered. Positions 119-128 (SSRVPGGSSG) are enriched in low complexity. The Acyl-ester intermediate role is filled by Ser150.

Belongs to the amidase family. GatA subfamily. Heterotrimer of A, B and C subunits.

It carries out the reaction L-glutamyl-tRNA(Gln) + L-glutamine + ATP + H2O = L-glutaminyl-tRNA(Gln) + L-glutamate + ADP + phosphate + H(+). Functionally, allows the formation of correctly charged Gln-tRNA(Gln) through the transamidation of misacylated Glu-tRNA(Gln) in organisms which lack glutaminyl-tRNA synthetase. The reaction takes place in the presence of glutamine and ATP through an activated gamma-phospho-Glu-tRNA(Gln). This chain is Glutamyl-tRNA(Gln) amidotransferase subunit A, found in Wolinella succinogenes (strain ATCC 29543 / DSM 1740 / CCUG 13145 / JCM 31913 / LMG 7466 / NCTC 11488 / FDC 602W) (Vibrio succinogenes).